A 399-amino-acid chain; its full sequence is 3-phosphoshikimate 1-carboxyvinyltransferase (399 aa).

Residues Lys19, Ser20, and Arg24 each coordinate 3-phosphoshikimate. Lys19 contributes to the phosphoenolpyruvate binding site. Phosphoenolpyruvate-binding residues include Gly83 and Arg111. 3-phosphoshikimate-binding residues include Ser152, Ser153, Gln154, Asp288, Gln310, and Lys314. A phosphoenolpyruvate-binding site is contributed by Gln154. Residue Asp288 is the Proton acceptor of the active site. Phosphoenolpyruvate is bound by residues Arg318, Arg359, and Lys385.

It belongs to the EPSP synthase family. In terms of assembly, monomer.

It is found in the cytoplasm. It carries out the reaction 3-phosphoshikimate + phosphoenolpyruvate = 5-O-(1-carboxyvinyl)-3-phosphoshikimate + phosphate. It functions in the pathway metabolic intermediate biosynthesis; chorismate biosynthesis. Catalyzes the transfer of the enolpyruvyl moiety of phosphoenolpyruvate (PEP) to the 5-hydroxyl of shikimate-3-phosphate (S3P) to produce enolpyruvyl shikimate-3-phosphate and inorganic phosphate. The chain is 3-phosphoshikimate 1-carboxyvinyltransferase from Thermococcus kodakarensis (strain ATCC BAA-918 / JCM 12380 / KOD1) (Pyrococcus kodakaraensis (strain KOD1)).